The following is a 224-amino-acid chain: ATP-dependent Clp protease proteolytic subunit 1 (224 aa).

Ser-120 serves as the catalytic Nucleophile. Residue His-145 is part of the active site.

It belongs to the peptidase S14 family. As to quaternary structure, fourteen ClpP subunits assemble into 2 heptameric rings which stack back to back to give a disk-like structure with a central cavity, resembling the structure of eukaryotic proteasomes.

The protein localises to the cytoplasm. It carries out the reaction Hydrolysis of proteins to small peptides in the presence of ATP and magnesium. alpha-casein is the usual test substrate. In the absence of ATP, only oligopeptides shorter than five residues are hydrolyzed (such as succinyl-Leu-Tyr-|-NHMec, and Leu-Tyr-Leu-|-Tyr-Trp, in which cleavage of the -Tyr-|-Leu- and -Tyr-|-Trp bonds also occurs).. Its function is as follows. Cleaves peptides in various proteins in a process that requires ATP hydrolysis. Has a chymotrypsin-like activity. Plays a major role in the degradation of misfolded proteins. The polypeptide is ATP-dependent Clp protease proteolytic subunit 1 (Prochlorococcus marinus (strain MIT 9313)).